Consider the following 1098-residue polypeptide: Transcription elongation regulator 1 (1098 aa).

Over residues 1 to 15 (MAERGGDGGESERFN) the composition is skewed to basic and acidic residues. The segment at 1–105 (MAERGGDGGE…RPPFMPPPMS (105 aa)) is disordered. Ser11 carries the phosphoserine modification. Residue Arg20 is modified to Omega-N-methylarginine. Asymmetric dimethylarginine is present on residues Arg28, Arg30, Arg41, and Arg48. The span at 32-105 (PAPPPNAVMR…RPPFMPPPMS (74 aa)) shows a compositional bias: pro residues. Positions 131–164 (PPTEEIWVENKTPDGKVYYYNARTRESAWTKPDG) constitute a WW 1 domain. Positions 184 to 244 (QAQAQAQAQA…AQAQAQAQVQ (61 aa)) form a coiled coil. Over residues 259–333 (STPTTSSPAP…PTATPVQTVP (75 aa)) the composition is skewed to low complexity. A disordered region spans residues 259 to 348 (STPTTSSPAP…TLPPAVPHSV (90 aa)). Pro residues predominate over residues 334–344 (QPHPQTLPPAV). Residues 429–462 (ATAVSEWTEYKTADGKTYYYNNRTLESTWEKPQE) enclose the WW 2 domain. Basic and acidic residues-rich tracts occupy residues 469–481 (LEEK…KEPS) and 496–506 (EEPIKEIKEEP). Residues 469-526 (LEEKIKEPIKEPSEEPLPMETEEEDPKEEPIKEIKEEPKEEEMTEEEKAAQKAKPVAT) form a disordered region. Residues Lys503 and Lys507 each participate in a glycyl lysine isopeptide (Lys-Gly) (interchain with G-Cter in SUMO2) cross-link. The WW 3 domain maps to 528–561 (PIPGTPWCVVWTGDERVFFYNPTTRLSMWDRPDD). Residues 606–655 (AIKEEQELMEEINEDEPVKAKKRKRDDNKDIDSEKEAAMEAEIKAARERA) are a coiled coil. Lys608 is covalently cross-linked (Glycyl lysine isopeptide (Lys-Gly) (interchain with G-Cter in SUMO2)). A disordered region spans residues 615 to 640 (EEINEDEPVKAKKRKRDDNKDIDSEK). The short motif at 626-630 (KKRKR) is the Nuclear localization signal element. Over residues 630–640 (RDDNKDIDSEK) the composition is skewed to basic and acidic residues. Ser638 is modified (phosphoserine). 3 consecutive FF domains span residues 659–712 (LEAR…YVKT), 725–779 (IMQA…FVAA), and 791–846 (RGEK…YIEK). Position 834 is a phosphoserine (Ser834). A coiled-coil region spans residues 844-906 (IEKIAKNLDS…EEAIQNFKAL (63 aa)). Positions 870–895 (REREREVQKARSEQTKEIDREREQHK) are disordered. FF domains are found at residues 896-952 (REEA…HIEA), 954-1010 (TKKK…YIRD), and 1012-1077 (YITA…YVDD). Phosphoserine is present on Ser933. Residues 1076–1098 (DDLDRRGPPPPPTASEPTRRSTK) are disordered.

As to quaternary structure, binds formin. Interacts (via the second WW domain) with TREX1 (via proline-rich region). Binds RNA polymerase II, HD and SF1. Detected in brain neurons.

The protein localises to the nucleus. Transcription factor that binds RNA polymerase II and inhibits the elongation of transcripts from target promoters. Regulates transcription elongation in a TATA box-dependent manner. Necessary for TAT-dependent activation of the human immunodeficiency virus type 1 (HIV-1) promoter. The polypeptide is Transcription elongation regulator 1 (TCERG1) (Homo sapiens (Human)).